Consider the following 355-residue polypeptide: MLDRLQAVENRYEKLNELLSDPEVISDTNKLREYSKEQSDIQDTVEVYREYKDVREQLRDAKAMLEDKLDADMRDMVKEEVSELEGQEKTLSERLKILLVPKDPNDDKNVIVEVRGAAGGDEAALFAGDLYRMYSRYAEVQGWKTEIIEASYTELGGYKEIIFMINGKGAFAKLKFENGAHRVQRVPETESGGRIHTSTATVAVLPEAEEVEINIHEKDVRVDTFASSGPGGQSVNTTMSAVRLTHLPTGVVVSCQDEKSQIKNKEKAMKVLRARVYDKFRQEAQAEYDQNRKQAVGTGDRSERIRTYNFPQNRVTDHRIGLTIQKLDQILQGKLDDFINALVMEDQAQKMEAAE.

Q233 is subject to N5-methylglutamine.

It belongs to the prokaryotic/mitochondrial release factor family. Post-translationally, methylated by PrmC. Methylation increases the termination efficiency of RF1.

The protein localises to the cytoplasm. Functionally, peptide chain release factor 1 directs the termination of translation in response to the peptide chain termination codons UAG and UAA. The protein is Peptide chain release factor 1 of Bacillus mycoides (strain KBAB4) (Bacillus weihenstephanensis).